We begin with the raw amino-acid sequence, 864 residues long: Disintegrin and metalloproteinase domain-containing protein 15 (864 aa).

The first 17 residues, 1–17, serve as a signal peptide directing secretion; the sequence is MRLALLWALGLLGAGSP. The tract at residues 18–45 is disordered; sequence RPSPPLPNIGGTEEEQQASPERTLSGSM. A propeptide spanning residues 18 to 207 is cleaved from the precursor; it reads RPSPPLPNIG…EQHHAHRLKR (190 aa). Residues 34 to 45 are compositionally biased toward polar residues; it reads QASPERTLSGSM. Residues 177–184 carry the Cysteine switch motif; the sequence is HTCAPSWH. Zn(2+) is bound at residue Cys179. Residues 208–696 lie on the Extracellular side of the membrane; it reads DVVTETKIVE…TQLKATSSLT (489 aa). Residues 214–415 form the Peptidase M12B domain; sequence KIVELVIVAD…GMGSCLFERQ (202 aa). N-linked (GlcNAc...) asparagine glycosylation is present at Asn238. 4 disulfide bridges follow: Cys324–Cys410, Cys366–Cys394, Cys368–Cys377, and Cys481–Cys501. His349 lines the Zn(2+) pocket. Residue Glu350 is part of the active site. Residues His353 and His359 each coordinate Zn(2+). Asn390 and Asn393 each carry an N-linked (GlcNAc...) asparagine glycan. The region spanning 422–509 is the Disintegrin domain; the sequence is SSLCGNMFVD…QCPSDIRLGD (88 aa). 2 N-linked (GlcNAc...) asparagine glycosylation sites follow: Asn607 and Asn612. 3 disulfide bridges follow: Cys658/Cys668, Cys662/Cys674, and Cys676/Cys685. Residues 658 to 686 form the EGF-like domain; that stretch reads CRRKCHGHGVCDSSGHCRCEEGWAPPDCM. The helical transmembrane segment at 697-717 threads the bilayer; that stretch reads TGLLLSLLLLLVLVLLGASYW. A phosphotyrosine; by HCK and LCK mark is found at Tyr716 and Tyr736. The Cytoplasmic segment spans residues 718-864; that stretch reads HRARLHQRLC…PPPAASSLYL (147 aa). The tract at residues 736–864 is disordered; the sequence is YRAPQSCPPE…PPPAASSLYL (129 aa). Residues 741-750 are compositionally biased toward pro residues; the sequence is SCPPERPGPP. Over residues 752–762 the composition is skewed to polar residues; that stretch reads RAQQMTGTKQA. 2 stretches are compositionally biased toward pro residues: residues 768–780 and 814–825; these read PVPP…PNPV and TKPPPPRKPLPA. 2 consecutive short sequence motifs (SH3-binding) follow at residues 816–822 and 851–857; these read PPPPRKP and RPAPPPP.

In terms of assembly, interacts specifically with Src family protein-tyrosine kinases (PTKs). Interacts with ITAGV-ITGB3 (vitronectin receptor). Interacts with SH3GL2 and SNX9; this interaction occurs preferentially with ADAM15 precursor, rather than the processed form, suggesting it occurs in a secretory pathway compartment prior to the medial Golgi. Interacts with ITAG9-ITGB1. Interacts with SH3PXD2A. Interacts with ITAGV-ITGB1. Interacts with GRB2, HCK, ITSN1, ITSN2, LYN, MAPK1, MAPK3, NCF1, NCK1, nephrocystin, PTK6, SNX33, LCK and SRC. Requires Zn(2+) as cofactor. In terms of processing, the precursor is cleaved by a furin endopeptidase. An additional membrane proximal site of cleavage affects a small percentage of the proteins and results in disulfide-linked fragments. The prodomain is apparently cleaved in several positions that are N-terminal of the furin cleavage site. May be partially sialylated. Post-translationally, phosphorylation increases association with PTKs. Expressed moderately in pericytes of retina. Expressed in testis and in spermatozoa from the caput, corpus, and cauda epididymis, as well as in non-capacitated and acrosome-reacted sperm (at protein level). Highly expressed in heart, brain, lung, and kidney. Expressed at lower levels in spleen, liver, testis and muscle.

The protein resides in the endomembrane system. The protein localises to the cell junction. Its subcellular location is the adherens junction. It is found in the cell projection. It localises to the cilium. The protein resides in the flagellum. The protein localises to the cytoplasmic vesicle. Its subcellular location is the secretory vesicle. It is found in the acrosome. Active metalloproteinase with gelatinolytic and collagenolytic activity. Plays a role in the wound healing process. Mediates both heterotypic intraepithelial cell/T-cell interactions and homotypic T-cell aggregation. Inhibits beta-1 integrin-mediated cell adhesion and migration of airway smooth muscle cells. Suppresses cell motility on or towards fibronectin possibly by driving alpha-v/beta-1 integrin (ITAGV-ITGB1) cell surface expression via ERK1/2 inactivation. Cleaves E-cadherin in response to growth factor deprivation. Plays a role in glomerular cell migration. Plays a role in pathological neovascularization. May play a role in cartilage remodeling. May be proteolytically processed, during sperm epididymal maturation and the acrosome reaction. May play a role in sperm-egg binding through its disintegrin domain. Interactions with egg membrane could be mediated via binding between the disintegrin-like domain to one or more integrin receptors on the egg. This Mus musculus (Mouse) protein is Disintegrin and metalloproteinase domain-containing protein 15 (Adam15).